Consider the following 224-residue polypeptide: Biosynthetic peptidoglycan transglycosylase (224 aa).

Residues 9–29 traverse the membrane as a helical segment; that stretch reads VLILVSFVLLIQLWIFCSLAW.

It belongs to the glycosyltransferase 51 family.

Its subcellular location is the cell inner membrane. The catalysed reaction is [GlcNAc-(1-&gt;4)-Mur2Ac(oyl-L-Ala-gamma-D-Glu-L-Lys-D-Ala-D-Ala)](n)-di-trans,octa-cis-undecaprenyl diphosphate + beta-D-GlcNAc-(1-&gt;4)-Mur2Ac(oyl-L-Ala-gamma-D-Glu-L-Lys-D-Ala-D-Ala)-di-trans,octa-cis-undecaprenyl diphosphate = [GlcNAc-(1-&gt;4)-Mur2Ac(oyl-L-Ala-gamma-D-Glu-L-Lys-D-Ala-D-Ala)](n+1)-di-trans,octa-cis-undecaprenyl diphosphate + di-trans,octa-cis-undecaprenyl diphosphate + H(+). It functions in the pathway cell wall biogenesis; peptidoglycan biosynthesis. Its function is as follows. Peptidoglycan polymerase that catalyzes glycan chain elongation from lipid-linked precursors. The chain is Biosynthetic peptidoglycan transglycosylase from Acinetobacter baylyi (strain ATCC 33305 / BD413 / ADP1).